The primary structure comprises 1534 residues: DNA polymerase alpha catalytic subunit (1534 aa).

The segment covering 1-12 (MDEGSADAGASG) has biased composition (low complexity). Disordered regions lie at residues 1–23 (MDEG…SEAV), 96–141 (THRT…LSAA), and 864–905 (FNST…GPSY). Over residues 116–125 (RKRKQPRPQS) the composition is skewed to basic residues. A compositionally biased stretch (low complexity) spans 127-141 (RPPQQSAAAASLSAA). Basic and acidic residues-rich tracts occupy residues 864–882 (FNST…RPDE) and 889–898 (DEGHHVDQGK). 8 residues coordinate Zn(2+): C1340, C1343, C1383, C1386, C1422, C1427, C1448, and C1454. The CysA-type zinc-finger motif lies at 1340-1386 (CPSCSTTFDCPPVSSLIIGSSSGNVSNPNEGNDASINFWRRMRCPRC). Positions 1422–1451 (CDDEGCKYSTHSVNLRVMGDSERGTICPNY) match the CysB motif motif.

Belongs to the DNA polymerase type-B family.

It localises to the nucleus. The catalysed reaction is DNA(n) + a 2'-deoxyribonucleoside 5'-triphosphate = DNA(n+1) + diphosphate. Functionally, polymerase alpha in a complex with DNA primase is a replicative polymerase. This is DNA polymerase alpha catalytic subunit from Oryza sativa subsp. japonica (Rice).